Consider the following 317-residue polypeptide: Olfactory receptor 6Q1 (317 aa).

The Extracellular segment spans residues Met-1–Leu-27. N-linked (GlcNAc...) asparagine glycosylation occurs at Asn-7. A helical membrane pass occupies residues Leu-28–Ile-48. Residues Leu-49 to Arg-56 are Cytoplasmic-facing. Residues Leu-57–Ser-77 traverse the membrane as a helical segment. Topologically, residues Val-78–Ser-103 are extracellular. Asn-95 is a glycosylation site (N-linked (GlcNAc...) asparagine). A disulfide bridge links Cys-101 with Cys-193. Residues Gln-104–Tyr-124 traverse the membrane as a helical segment. At Asp-125 to Gly-143 the chain is on the cytoplasmic side. Residues Thr-144 to Ile-164 form a helical membrane-spanning segment. Topologically, residues Tyr-165–Thr-201 are extracellular. The helical transmembrane segment at Val-202 to Ser-221 threads the bilayer. Over Tyr-222–Ala-241 the chain is Cytoplasmic. The chain crosses the membrane as a helical span at residues Phe-242–Met-262. Topologically, residues Tyr-263–Asn-275 are extracellular. The chain crosses the membrane as a helical span at residues Lys-276 to Leu-296. The Cytoplasmic segment spans residues Arg-297 to Gln-317.

Belongs to the G-protein coupled receptor 1 family.

Its subcellular location is the cell membrane. In terms of biological role, odorant receptor. The chain is Olfactory receptor 6Q1 (OR6Q1) from Homo sapiens (Human).